Reading from the N-terminus, the 663-residue chain is Probable rhamnogalacturonate lyase B (663 aa).

A signal peptide spans 1 to 19 (MRLRTSLGVASACASVASA). N-linked (GlcNAc...) asparagine glycosylation is found at Asn-27, Asn-110, Asn-143, Asn-239, Asn-285, Asn-495, Asn-535, Asn-569, Asn-597, and Asn-638.

Belongs to the polysaccharide lyase 4 family.

The protein resides in the secreted. The catalysed reaction is Endotype eliminative cleavage of L-alpha-rhamnopyranosyl-(1-&gt;4)-alpha-D-galactopyranosyluronic acid bonds of rhamnogalacturonan I domains in ramified hairy regions of pectin leaving L-rhamnopyranose at the reducing end and 4-deoxy-4,5-unsaturated D-galactopyranosyluronic acid at the non-reducing end.. Functionally, pectinolytic enzymes consist of four classes of enzymes: pectin lyase, polygalacturonase, pectin methylesterase and rhamnogalacturonase. Degrades the rhamnogalacturonan I (RG-I) backbone of pectin. In Aspergillus flavus (strain ATCC 200026 / FGSC A1120 / IAM 13836 / NRRL 3357 / JCM 12722 / SRRC 167), this protein is Probable rhamnogalacturonate lyase B (rglB).